Here is a 474-residue protein sequence, read N- to C-terminus: ATP synthase subunit beta (474 aa).

158 to 165 (GGAGVGKT) is an ATP binding site.

This sequence belongs to the ATPase alpha/beta chains family. As to quaternary structure, F-type ATPases have 2 components, CF(1) - the catalytic core - and CF(0) - the membrane proton channel. CF(1) has five subunits: alpha(3), beta(3), gamma(1), delta(1), epsilon(1). CF(0) has three main subunits: a(1), b(2) and c(9-12). The alpha and beta chains form an alternating ring which encloses part of the gamma chain. CF(1) is attached to CF(0) by a central stalk formed by the gamma and epsilon chains, while a peripheral stalk is formed by the delta and b chains.

Its subcellular location is the cell membrane. It catalyses the reaction ATP + H2O + 4 H(+)(in) = ADP + phosphate + 5 H(+)(out). Its function is as follows. Produces ATP from ADP in the presence of a proton gradient across the membrane. The catalytic sites are hosted primarily by the beta subunits. The chain is ATP synthase subunit beta from Tropheryma whipplei (strain Twist) (Whipple's bacillus).